The sequence spans 440 residues: Damage-control phosphatase ARMT1 (440 aa).

Residues aspartate 252 and asparagine 253 each contribute to the Mn(2+) site. Residue 252–253 (DN) participates in substrate binding. S-adenosyl-L-methionine-binding residues include glutamate 257 and aspartate 290. Aspartate 290 lines the Mn(2+) pocket. Substrate contacts are provided by residues 366–370 (DLNYR) and lysine 403. The Subfamily III RTxK motif motif lies at 400-403 (RTLK).

This sequence belongs to the damage-control phosphatase family. Sugar phosphate phosphatase III subfamily. Mn(2+) is required as a cofactor. Requires Ni(2+) as cofactor. In terms of processing, automethylated.

It catalyses the reaction beta-D-fructose 1-phosphate + H2O = D-fructose + phosphate. It carries out the reaction beta-D-fructose 6-phosphate = dihydroxyacetone + D-glyceraldehyde 3-phosphate. The catalysed reaction is L-glutamyl-[protein] + S-adenosyl-L-methionine = [protein]-L-glutamate 5-O-methyl ester + S-adenosyl-L-homocysteine. Metal-dependent phosphatase that shows phosphatase activity against several substrates, including fructose-1-phosphate and fructose-6-phosphate. Its preference for fructose-1-phosphate, a strong glycating agent that causes DNA damage rather than a canonical yeast metabolite, suggests a damage-control function in hexose phosphate metabolism. Has also been shown to have O-methyltransferase activity that methylates glutamate residues of target proteins to form gamma-glutamyl methyl ester residues. Possibly methylates PCNA, suggesting it is involved in the DNA damage response. This is Damage-control phosphatase ARMT1 from Xenopus laevis (African clawed frog).